Here is a 986-residue protein sequence, read N- to C-terminus: Ephrin type-A receptor 4 (986 aa).

An N-terminal signal peptide occupies residues 1–19; it reads MAGIFYFALFSCLFGICDA. Residues 20–547 lie on the Extracellular side of the membrane; sequence VTGSRVYPAN…RIIGDGANST (528 aa). The Eph LBD domain maps to 30 to 209; it reads EVTLLDSRSV…FYKKCPLTVR (180 aa). N-linked (GlcNAc...) asparagine glycosylation is found at Asn-235, Asn-340, and Asn-408. Fibronectin type-III domains lie at 328–439 and 440–537; these read PPSA…TNQA and APSS…TVPS. N-linked (GlcNAc...) asparagine glycosylation occurs at Asn-545. A helical transmembrane segment spans residues 548-569; that stretch reads VLLVSVSGSVVLVVILIAAFVI. Topologically, residues 570 to 986 are cytoplasmic; it reads SRRRSKYSKA…QQMHGRMVPV (417 aa). A phosphotyrosine; by autocatalysis mark is found at Tyr-596 and Tyr-602. The Protein kinase domain occupies 621-882; it reads IKIEKVIGVG…QIVNMLDKLI (262 aa). Residues 627–635 and Lys-653 each bind ATP; that span reads IGVGEFGEV. Residue Asp-746 is the Proton acceptor of the active site. A phosphotyrosine; by autocatalysis mark is found at Tyr-779 and Tyr-928. The 65-residue stretch at 911 to 975 folds into the SAM domain; it reads SAVVSVGDWL…LSSVQAMRTQ (65 aa). A PDZ-binding motif is present at residues 984-986; the sequence is VPV.

The protein belongs to the protein kinase superfamily. Tyr protein kinase family. Ephrin receptor subfamily. As to quaternary structure, heterotetramer upon binding of the ligand. The heterotetramer is composed of an ephrin dimer and a receptor dimer. Oligomerization is probably required to induce biological responses. Interacts (phosphorylated at position Tyr-602) with FYN. Interacts with CDK5, CDK5R1 and NGEF; upon activation by EFNA1 induces NGEF phosphorylation by the kinase CDK5. Interacts with CHN1; effector of EPHA4 in axon guidance linking EPHA4 activation to RAC1 regulation. Interacts (via PDZ motif) with SIPA1L1 (via PDZ domain); controls neuronal morphology through regulation of the RAP1 (RAP1A or RAP1B) and RAP2 (RAP2A, RAP2B or RAP2C) GTPases. Forms a ternary complex composed of ADAM10, CADH1 and EPHA4; within the complex, CADH1 is cleaved by ADAM10 which disrupts adherens junctions. Ubiquitous.

It is found in the cell membrane. The protein resides in the cell projection. Its subcellular location is the axon. The protein localises to the dendrite. It localises to the postsynaptic density membrane. It is found in the early endosome. The protein resides in the cell junction. Its subcellular location is the adherens junction. It carries out the reaction L-tyrosyl-[protein] + ATP = O-phospho-L-tyrosyl-[protein] + ADP + H(+). Its function is as follows. Receptor tyrosine kinase which binds membrane-bound ephrin family ligands residing on adjacent cells, leading to contact-dependent bidirectional signaling into neighboring cells. The signaling pathway downstream of the receptor is referred to as forward signaling while the signaling pathway downstream of the ephrin ligand is referred to as reverse signaling. Highly promiscuous, it has the unique property among Eph receptors to bind and to be physiologically activated by both GPI-anchored ephrin-A and transmembrane ephrin-B ligands including EFNA1 and EFNB3. Upon activation by ephrin ligands, modulates cell morphology and integrin-dependent cell adhesion through regulation of the Rac, Rap and Rho GTPases activity. Plays an important role in the development of the nervous system controlling different steps of axonal guidance including the establishment of the corticospinal projections. May also control the segregation of motor and sensory axons during neuromuscular circuit development. In addition to its role in axonal guidance plays a role in synaptic plasticity. Activated by EFNA1 phosphorylates CDK5 at 'Tyr-15' which in turn phosphorylates NGEF regulating RHOA and dendritic spine morphogenesis. In the nervous system, also plays a role in repair after injury preventing axonal regeneration and in angiogenesis playing a role in central nervous system vascular formation. Additionally, its promiscuity makes it available to participate in a variety of cell-cell signaling regulating for instance the development of the thymic epithelium. During development of the cochlear organ of Corti, regulates pillar cell separation by forming a ternary complex with ADAM10 and CADH1 which facilitates the cleavage of CADH1 by ADAM10 and disruption of adherens junctions. Phosphorylates CAPRIN1, promoting CAPRIN1-dependent formation of a membraneless compartment. This is Ephrin type-A receptor 4 (EPHA4) from Homo sapiens (Human).